We begin with the raw amino-acid sequence, 393 residues long: Chorismate synthase (393 aa).

NADP(+)-binding residues include Arg40 and Arg46. FMN is bound by residues 129–131, 249–250, Gly301, 316–320, and Arg342; these read RSS, QA, and KPIPT.

It belongs to the chorismate synthase family. In terms of assembly, homotetramer. Requires FMNH2 as cofactor.

The enzyme catalyses 5-O-(1-carboxyvinyl)-3-phosphoshikimate = chorismate + phosphate. The protein operates within metabolic intermediate biosynthesis; chorismate biosynthesis; chorismate from D-erythrose 4-phosphate and phosphoenolpyruvate: step 7/7. Its function is as follows. Catalyzes the anti-1,4-elimination of the C-3 phosphate and the C-6 proR hydrogen from 5-enolpyruvylshikimate-3-phosphate (EPSP) to yield chorismate, which is the branch point compound that serves as the starting substrate for the three terminal pathways of aromatic amino acid biosynthesis. This reaction introduces a second double bond into the aromatic ring system. The chain is Chorismate synthase from Geobacter metallireducens (strain ATCC 53774 / DSM 7210 / GS-15).